The sequence spans 295 residues: ATP synthase gamma chain (295 aa).

The protein belongs to the ATPase gamma chain family. As to quaternary structure, F-type ATPases have 2 components, CF(1) - the catalytic core - and CF(0) - the membrane proton channel. CF(1) has five subunits: alpha(3), beta(3), gamma(1), delta(1), epsilon(1). CF(0) has three main subunits: a, b and c.

It is found in the cell inner membrane. Produces ATP from ADP in the presence of a proton gradient across the membrane. The gamma chain is believed to be important in regulating ATPase activity and the flow of protons through the CF(0) complex. The polypeptide is ATP synthase gamma chain (Sulfurovum sp. (strain NBC37-1)).